A 180-amino-acid chain; its full sequence is Adenine phosphoribosyltransferase (180 aa).

Belongs to the purine/pyrimidine phosphoribosyltransferase family. In terms of assembly, homodimer.

Its subcellular location is the cytoplasm. It carries out the reaction AMP + diphosphate = 5-phospho-alpha-D-ribose 1-diphosphate + adenine. It functions in the pathway purine metabolism; AMP biosynthesis via salvage pathway; AMP from adenine: step 1/1. Functionally, catalyzes a salvage reaction resulting in the formation of AMP, that is energically less costly than de novo synthesis. The protein is Adenine phosphoribosyltransferase of Marinomonas sp. (strain MWYL1).